Reading from the N-terminus, the 526-residue chain is GMP synthase [glutamine-hydrolyzing] (526 aa).

The Glutamine amidotransferase type-1 domain occupies 9 to 208 (RILILDFGSQ…VMDICGCETL (200 aa)). Cys-86 acts as the Nucleophile in catalysis. Catalysis depends on residues His-182 and Glu-184. The GMPS ATP-PPase domain occupies 209-401 (WTSSSIIEDA…LGLPYEMLYR (193 aa)). 236 to 242 (SGGVDSS) lines the ATP pocket.

As to quaternary structure, homodimer.

It carries out the reaction XMP + L-glutamine + ATP + H2O = GMP + L-glutamate + AMP + diphosphate + 2 H(+). Its pathway is purine metabolism; GMP biosynthesis; GMP from XMP (L-Gln route): step 1/1. Catalyzes the synthesis of GMP from XMP. The polypeptide is GMP synthase [glutamine-hydrolyzing] (Psychromonas ingrahamii (strain DSM 17664 / CCUG 51855 / 37)).